We begin with the raw amino-acid sequence, 1871 residues long: Callose synthase 4 (1871 aa).

Residues 1–491 (MNQPNRGQIL…FWHLFRSFDR (491 aa)) are Cytoplasmic-facing. Residues 492-512 (MWSFYILSLQAMIIIAWNETS) form a helical membrane-spanning segment. Residues 513–521 (ESGGAVFHK) are Extracellular-facing. A helical membrane pass occupies residues 522–542 (VLSVFITAAKLNLFQAFLDIA). Topologically, residues 543–558 (LSWKARHSMSTHVRQR) are cytoplasmic. A helical membrane pass occupies residues 559 to 579 (YIFKAVAAAVWVLLMPLTYAY). Residues 580 to 583 (SHTS) are Extracellular-facing. The chain crosses the membrane as a helical span at residues 584-604 (IFIVAILIYLSPNMLPEMLLL). The Cytoplasmic portion of the chain corresponds to 605–640 (IPSIRRTLEKSDFRPVKLIMWWSQPELYIGRGMHES). Residues 641 to 661 (AWSIYKYMMFWIVLLTSKLAF) traverse the membrane as a helical segment. Residues 662-701 (SYYVEQIKPLMGPTKEIMSVPMPGYWLPEFFPHVKNNRGV) lie on the Extracellular side of the membrane. A helical membrane pass occupies residues 702–724 (VITLWSPVILVYFMDTQIWYAIV). Topologically, residues 725 to 1441 (STLVGGLYGA…FDFFRMLSCY (717 aa)) are cytoplasmic. Residues 1442-1462 (FTTVGFYFCSMLTVLTVYVFL) form a helical membrane-spanning segment. Topologically, residues 1463-1485 (YGRLYLVLSGVEKELGNKPMMME) are extracellular. A helical transmembrane segment spans residues 1486 to 1506 (IILASQSFVQIVFLMAMPMIM). Residues 1507-1516 (EIGLERGFYD) lie on the Cytoplasmic side of the membrane. Residues 1517–1537 (ALFDFVLMQLQLASVFFTFQL) form a helical membrane-spanning segment. The Extracellular segment spans residues 1538 to 1580 (GTKFHYYCKTLLHGGAEYRGTGRGFVVFHAKFAENYRFYSRSH). Transmembrane regions (helical) follow at residues 1581-1601 (FVKATELGILLLVYHIFGPTY) and 1602-1622 (IGLFTISIWFMVGTWLFAPFL). Over 1623 to 1675 (FNPSGFEWHEIVEDWADWKKWIEYDNGGIGVPPEKSWESWWEKDIEHLQHSGK) the chain is Extracellular. The chain crosses the membrane as a helical span at residues 1676 to 1696 (WGIVVEIFFALRFFIFQYGLV). Topologically, residues 1697–1708 (YQLSAFKNKYSS) are cytoplasmic. A helical transmembrane segment spans residues 1709-1729 (LWVFGASWLLILILLLTVTVL). The Extracellular portion of the chain corresponds to 1730 to 1741 (DYARRRLGTEFQ). Residues 1742–1762 (LLFRIIKVSLFLAFMAIFITL) traverse the membrane as a helical segment. The Cytoplasmic portion of the chain corresponds to 1763 to 1772 (MTCRLILPQD). Residues 1773-1793 (VFLCMLALIPTGWGLLLIAQS) form a helical membrane-spanning segment. At 1794 to 1815 (CKPLIQQPGIWSWVMTLAWVYD) the chain is on the extracellular side. A helical transmembrane segment spans residues 1816 to 1836 (LVMGSLLFIPIAFMAWFPFIS). The Cytoplasmic portion of the chain corresponds to 1837-1871 (EFQTRMLFNQAFSRGLHISRILSGQRKHRSSKNKD).

This sequence belongs to the glycosyltransferase 48 family.

It is found in the cell membrane. It catalyses the reaction [(1-&gt;3)-beta-D-glucosyl](n) + UDP-alpha-D-glucose = [(1-&gt;3)-beta-D-glucosyl](n+1) + UDP + H(+). In terms of biological role, involved in callose synthesis at the forming cell plate during cytokinesis. During plant growth and development, callose is found as a transitory component of the cell plate in dividing cells, is a major component of pollen mother cell walls and pollen tubes, and is found as a structural component of plasmodesmatal canals. The chain is Callose synthase 4 (CALS4) from Arabidopsis thaliana (Mouse-ear cress).